The following is a 413-amino-acid chain: Ferredoxin--NADP reductase (413 aa).

Met1 carries the post-translational modification N-acetylmethionine. The 59-residue stretch at 18 to 76 (NRLFVYEVIGLSQSTMTDGLDYPIRRSGSTFITVPLKRMNQEMRRITRMGGKIVSIKPL) folds into the CpcD-like domain. Residues 74 to 120 (KPLEGDSPLPHTEGIAKPSQSEGSGSEAVANPAPESNKTMTTTPKEK) are disordered. Positions 107–116 (PESNKTMTTT) are enriched in polar residues. The 124-residue stretch at 133–256 (KTPYIGKVLE…TGPVGKEMLL (124 aa)) folds into the FAD-binding FR-type domain. FAD contacts are provided by residues 192–195 (RLYS), 213–215 (CVR), Tyr219, 230–232 (VCS), and Thr271. Positions 195 and 215 each coordinate NADP(+). Residues Thr271, 303–304 (IP), 333–334 (SR), 343–347 (RMYIQ), 372–373 (GL), and Glu411 each bind NADP(+).

It belongs to the ferredoxin--NADP reductase type 1 family. Purifies with both the classic phycobilisome (PBS) supercomplex (CpcG-PBS) and a photosystem I-associated PBS called CpcL-PBS; it accumulates to a higher level in CpcL-PBS. In both PBS it can be cross-linked to both phycocyanin subunits. The cofactor is FAD. Post-translationally, acetylated at the N-terminus; 6% of protein in CpcG-PBS and 12% of protein in CpcL-PBS is acetylated.

It localises to the cellular thylakoid membrane. The enzyme catalyses 2 reduced [2Fe-2S]-[ferredoxin] + NADP(+) + H(+) = 2 oxidized [2Fe-2S]-[ferredoxin] + NADPH. The protein is Ferredoxin--NADP reductase of Synechocystis sp. (strain ATCC 27184 / PCC 6803 / Kazusa).